A 92-amino-acid polypeptide reads, in one-letter code: Cell division protein FtsB (92 aa).

Residues 1–3 (MKW) are Cytoplasmic-facing. A helical membrane pass occupies residues 4–21 (VTVVLSFALVCCQYSLWF). Topologically, residues 22–92 (GKGSIGRNSS…TFYRLIRHNR (71 aa)) are periplasmic. Positions 28–50 (RNSSLREQIAVQEEKNQTLALRN) form a coiled coil.

The protein belongs to the FtsB family. In terms of assembly, part of a complex composed of FtsB, FtsL and FtsQ.

It is found in the cell inner membrane. Essential cell division protein. May link together the upstream cell division proteins, which are predominantly cytoplasmic, with the downstream cell division proteins, which are predominantly periplasmic. This chain is Cell division protein FtsB, found in Neisseria meningitidis serogroup C (strain 053442).